Reading from the N-terminus, the 874-residue chain is Alanine--tRNA ligase (874 aa).

Zn(2+) contacts are provided by His562, His566, Cys665, and His669.

It belongs to the class-II aminoacyl-tRNA synthetase family. The cofactor is Zn(2+).

It is found in the cytoplasm. The catalysed reaction is tRNA(Ala) + L-alanine + ATP = L-alanyl-tRNA(Ala) + AMP + diphosphate. Catalyzes the attachment of alanine to tRNA(Ala) in a two-step reaction: alanine is first activated by ATP to form Ala-AMP and then transferred to the acceptor end of tRNA(Ala). Also edits incorrectly charged Ser-tRNA(Ala) and Gly-tRNA(Ala) via its editing domain. The chain is Alanine--tRNA ligase from Pseudomonas putida (strain GB-1).